Consider the following 152-residue polypeptide: Sulfur-rich protein (152 aa).

Residues M1–S20 form a disordered region. Transmembrane regions (helical) follow at residues V43 to A63 and A69 to L89.

The protein resides in the membrane. This chain is Sulfur-rich protein (srp), found in Chlamydia trachomatis serovar A (strain ATCC VR-571B / DSM 19440 / HAR-13).